The chain runs to 247 residues: V-type proton ATPase subunit D (247 aa).

Belongs to the V-ATPase D subunit family. As to quaternary structure, V-ATPase is a heteromultimeric enzyme made up of two complexes: the ATP-hydrolytic V1 complex and the proton translocation V0 complex. The V1 complex consists of three catalytic AB heterodimers that form a heterohexamer, three peripheral stalks each consisting of EG heterodimers, one central rotor including subunits D and F, and the regulatory subunits C and H. The proton translocation complex V0 consists of the proton transport subunit a, a ring of proteolipid subunits c9c'', rotary subunit d, subunits e and f, and the accessory subunits ATP6AP1/Ac45 and ATP6AP2/PRR. Interacts with SNX10. Expressed in brain (at protein level). Present in tissues active in secretion. Amounts elevated in brain, kidney and testis.

The protein resides in the membrane. It localises to the cytoplasmic vesicle. It is found in the clathrin-coated vesicle membrane. Its subcellular location is the cytoplasm. The protein localises to the cytoskeleton. The protein resides in the microtubule organizing center. It localises to the centrosome. It is found in the cell projection. Its subcellular location is the cilium. Subunit of the V1 complex of vacuolar(H+)-ATPase (V-ATPase), a multisubunit enzyme composed of a peripheral complex (V1) that hydrolyzes ATP and a membrane integral complex (V0) that translocates protons. V-ATPase is responsible for acidifying and maintaining the pH of intracellular compartments and in some cell types, is targeted to the plasma membrane, where it is responsible for acidifying the extracellular environment. May play a role in cilium biogenesis through regulation of the transport and the localization of proteins to the cilium. This chain is V-type proton ATPase subunit D (ATP6V1D), found in Bos taurus (Bovine).